The following is an 863-amino-acid chain: Alanine--tRNA ligase (863 aa).

Residues His552, His556, Cys654, and His658 each contribute to the Zn(2+) site.

This sequence belongs to the class-II aminoacyl-tRNA synthetase family. Zn(2+) serves as cofactor.

The protein localises to the cytoplasm. It catalyses the reaction tRNA(Ala) + L-alanine + ATP = L-alanyl-tRNA(Ala) + AMP + diphosphate. Catalyzes the attachment of alanine to tRNA(Ala) in a two-step reaction: alanine is first activated by ATP to form Ala-AMP and then transferred to the acceptor end of tRNA(Ala). Also edits incorrectly charged Ser-tRNA(Ala) and Gly-tRNA(Ala) via its editing domain. This is Alanine--tRNA ligase from Nitrosomonas eutropha (strain DSM 101675 / C91 / Nm57).